The primary structure comprises 314 residues: 1-aminocyclopropane-1-carboxylate oxidase 1 (314 aa).

In terms of domain architecture, Fe2OG dioxygenase spans 153–253 (PNFGTKVSNY…RMSIASFYNP (101 aa)). Residues histidine 177, aspartate 179, and histidine 234 each coordinate Fe cation.

It belongs to the iron/ascorbate-dependent oxidoreductase family. In terms of assembly, monomer. It depends on Fe cation as a cofactor.

It catalyses the reaction 1-aminocyclopropane-1-carboxylate + L-ascorbate + O2 = ethene + L-dehydroascorbate + hydrogen cyanide + CO2 + 2 H2O. The protein operates within alkene biosynthesis; ethylene biosynthesis via S-adenosyl-L-methionine; ethylene from S-adenosyl-L-methionine: step 2/2. This is 1-aminocyclopropane-1-carboxylate oxidase 1 from Malus domestica (Apple).